An 807-amino-acid polypeptide reads, in one-letter code: Glycerol-3-phosphate acyltransferase (807 aa).

The short motif at 305-310 (CHRSHM) is the HXXXXD motif element.

This sequence belongs to the GPAT/DAPAT family.

The protein resides in the cell inner membrane. It catalyses the reaction sn-glycerol 3-phosphate + an acyl-CoA = a 1-acyl-sn-glycero-3-phosphate + CoA. Its pathway is phospholipid metabolism; CDP-diacylglycerol biosynthesis; CDP-diacylglycerol from sn-glycerol 3-phosphate: step 1/3. The chain is Glycerol-3-phosphate acyltransferase from Escherichia coli O139:H28 (strain E24377A / ETEC).